A 393-amino-acid polypeptide reads, in one-letter code: Phosphoglycerate kinase (393 aa).

Residues 21–23 (DFN), R36, 59–62 (HLGR), R118, and R151 contribute to the substrate site. ATP is bound by residues K201, E323, and 349–352 (GGDS).

This sequence belongs to the phosphoglycerate kinase family. Monomer.

It is found in the cytoplasm. The catalysed reaction is (2R)-3-phosphoglycerate + ATP = (2R)-3-phospho-glyceroyl phosphate + ADP. The protein operates within carbohydrate degradation; glycolysis; pyruvate from D-glyceraldehyde 3-phosphate: step 2/5. This is Phosphoglycerate kinase from Moorella thermoacetica (strain ATCC 39073 / JCM 9320).